The following is a 255-amino-acid chain: DNA repair protein RecO (255 aa).

It belongs to the RecO family.

Involved in DNA repair and RecF pathway recombination. The protein is DNA repair protein RecO of Bacillus velezensis (strain DSM 23117 / BGSC 10A6 / LMG 26770 / FZB42) (Bacillus amyloliquefaciens subsp. plantarum).